Here is a 2157-residue protein sequence, read N- to C-terminus: Unconventional myosin-IXb (2157 aa).

The residue at position 2 (Ser-2) is an N-acetylserine. One can recognise a Ras-associating domain in the interval 15-114 (AAYHLHIYPQ…YYFLLQERNA (100 aa)). Residues 146–953 (ADFDDLCNLP…ERQALQETLH (808 aa)) enclose the Myosin motor domain. ATP is bound at residue 239-246 (GESGSGKT). Residues 709–734 (AEKAAGMSSPGAQSHPEELPRGASTP) form a disordered region. Residues Ser-716 and Ser-717 each carry the phosphoserine modification. The segment at 844 to 855 (KAEPFFIRCIRS) is actin-binding. The interval 940–1044 (LKETERQALQ…CRGHLQRKSF (105 aa)) is neck or regulatory domain. 4 IQ domains span residues 957 to 977 (VRKILLLQSWFRMVLERRHFL), 979 to 1000 (MKRAAVTIQACWRSYRVRRALE), 1001 to 1023 (RTQAAVYLQASWRGYWQRKLYRH), and 1024 to 1053 (QKQSIIRLQSLCRGHLQRKSFSQMISEKQK). At Ser-1045 the chain carries Phosphoserine. Residues 1045 to 2157 (SQMISEKQKA…LPPASGQTNG (1113 aa)) are tail. Positions 1046 to 1071 (QMISEKQKAEEKEREALEAARAGAEE) form a coiled coil. 3 disordered regions span residues 1046 to 1298 (QMIS…TQIQ), 1320 to 1410 (AAAS…GSQV), and 1455 to 1484 (GLEAPSGQQHRHAAGEKRTKEPGGKGKKNR). Composition is skewed to basic and acidic residues over residues 1050-1063 (EKQKAEEKEREALE), 1109-1122 (SPLEHSSPEKEAPS), 1136-1160 (ESHEKVPSSREKRESRRQRGLEHVK), 1168-1183 (SCKEESALREPSRRVT), and 1191-1201 (LEDKKESREDE). Phosphoserine occurs at positions 1114, 1115, and 1122. Residues 1211-1222 (ENTSQKQPTEQP) show a composition bias toward polar residues. Phosphoserine occurs at positions 1242, 1253, 1261, and 1267. Thr-1271 is modified (phosphothreonine). Ser-1290, Ser-1323, and Ser-1331 each carry phosphoserine. Phosphothreonine is present on Thr-1346. Ser-1354, Ser-1356, and Ser-1405 each carry phosphoserine. The segment covering 1467–1478 (AAGEKRTKEPGG) has biased composition (basic and acidic residues). The Phorbol-ester/DAG-type zinc-finger motif lies at 1632–1681 (GHVFASYQVSIPQSCEQCLSYIWLMDKALLCSVCKMTCHKKCVHKIQSHC). In terms of domain architecture, Rho-GAP spans 1703–1888 (DSLTSDKASV…MLIKEQMRKY (186 aa)). Residues 1739-1744 (AANRTR) form an interaction with RHOA region. Residues 1880–1901 (LIKEQMRKYKVKMEEISQLEAA) are a coiled coil. Phosphoserine occurs at positions 1926, 1972, 1992, and 1999. Residues 1959–1989 (EDREKEILIERIQSIKEEKEDITYRLPELDP) are a coiled coil. The span at 1980 to 1993 (ITYRLPELDPRGSD) shows a compositional bias: basic and acidic residues. The segment at 1980 to 2157 (ITYRLPELDP…LPPASGQTNG (178 aa)) is disordered. Thr-2005 is modified (phosphothreonine). A compositionally biased stretch (pro residues) spans 2021 to 2037 (PPAPALPCPGAPTPSPL). Ser-2050 is modified (phosphoserine). The segment covering 2081-2093 (PRWAPGAREAAAP) has biased composition (low complexity). The segment covering 2095 to 2106 (RRREPPARRPDQ) has biased composition (basic and acidic residues). Ser-2141 is modified (phosphoserine).

This sequence belongs to the TRAFAC class myosin-kinesin ATPase superfamily. Myosin family. As to quaternary structure, interacts (via IQ domains) with CALM. Interacts with RHOA. Interacts (via Rho-GAP domain) with ROBO1; this inhibits the interaction with RHOA and the stimulation of RHOA GTPase activity, and thereby increases the levels of active RHOA. Detected in peripheral blood leukocytes (at protein level). Expressed predominantly in peripheral blood leukocytes and at lower levels, in thymus, spleen, testis, prostate, ovary, brain, small intestine and lung.

The protein resides in the cytoplasm. Its subcellular location is the cell cortex. It localises to the perinuclear region. The protein localises to the cytoskeleton. Functionally, myosins are actin-based motor molecules with ATPase activity. Unconventional myosins serve in intracellular movements. Binds actin with high affinity both in the absence and presence of ATP and its mechanochemical activity is inhibited by calcium ions. Also acts as a GTPase activator for RHOA. Plays a role in the regulation of cell migration via its role as RHOA GTPase activator. This is regulated by its interaction with the SLIT2 receptor ROBO1; interaction with ROBO1 impairs interaction with RHOA and subsequent activation of RHOA GTPase activity, and thereby leads to increased levels of active, GTP-bound RHOA. The chain is Unconventional myosin-IXb (MYO9B) from Homo sapiens (Human).